A 209-amino-acid polypeptide reads, in one-letter code: Large ribosomal subunit protein uL3 (209 aa).

An N5-methylglutamine modification is found at Gln150.

This sequence belongs to the universal ribosomal protein uL3 family. As to quaternary structure, part of the 50S ribosomal subunit. Forms a cluster with proteins L14 and L19. Post-translationally, methylated by PrmB.

Functionally, one of the primary rRNA binding proteins, it binds directly near the 3'-end of the 23S rRNA, where it nucleates assembly of the 50S subunit. The chain is Large ribosomal subunit protein uL3 from Salmonella arizonae (strain ATCC BAA-731 / CDC346-86 / RSK2980).